The chain runs to 221 residues: Woronin body major protein (221 aa).

Positions 219-221 (SRL) match the Microbody targeting signal motif.

The protein belongs to the eIF-5A family. Hex1 subfamily. As to quaternary structure, forms oligomers. Self-assembles into hexagonal rods.

The protein resides in the cell septum. Functionally, major component of Woronin bodies, fungal-specific organelles that occlude septal pores in order to separate intact from damaged compartments. Hex1 binds directly or indirectly to the Woronin body tether that in turn is anchored at the rim of the septal pore. The chain is Woronin body major protein from Emericella nidulans (strain FGSC A4 / ATCC 38163 / CBS 112.46 / NRRL 194 / M139) (Aspergillus nidulans).